We begin with the raw amino-acid sequence, 502 residues long: Lipoyl synthase, apicoplast (502 aa).

The first 16 residues, Met1–Pro16, serve as a signal peptide directing secretion. [4Fe-4S] cluster-binding residues include Cys192, Cys197, Cys203, Cys218, Cys222, Cys225, and Ser433. The Radical SAM core domain occupies Trp204–Lys422.

The protein belongs to the radical SAM superfamily. Lipoyl synthase family. It depends on [4Fe-4S] cluster as a cofactor.

It is found in the plastid. The protein localises to the apicoplast. It carries out the reaction [[Fe-S] cluster scaffold protein carrying a second [4Fe-4S](2+) cluster] + N(6)-octanoyl-L-lysyl-[protein] + 2 oxidized [2Fe-2S]-[ferredoxin] + 2 S-adenosyl-L-methionine + 4 H(+) = [[Fe-S] cluster scaffold protein] + N(6)-[(R)-dihydrolipoyl]-L-lysyl-[protein] + 4 Fe(3+) + 2 hydrogen sulfide + 2 5'-deoxyadenosine + 2 L-methionine + 2 reduced [2Fe-2S]-[ferredoxin]. It functions in the pathway protein modification; protein lipoylation via endogenous pathway; protein N(6)-(lipoyl)lysine from octanoyl-[acyl-carrier-protein]: step 2/2. Functionally, catalyzes the radical-mediated insertion of two sulfur atoms into the C-6 and C-8 positions of the octanoyl moiety bound to the lipoyl domains of lipoate-dependent enzymes, thereby converting the octanoylated domains into lipoylated derivatives. In Plasmodium yoelii yoelii, this protein is Lipoyl synthase, apicoplast.